Here is a 302-residue protein sequence, read N- to C-terminus: Ornithine carbamoyltransferase (302 aa).

Carbamoyl phosphate-binding positions include 53–56 (STRT), Q80, R104, and 131–134 (HPCQ). L-ornithine-binding positions include N162, D219, and 223 to 224 (SM). Carbamoyl phosphate contacts are provided by residues 259-260 (CL) and R287.

It belongs to the aspartate/ornithine carbamoyltransferase superfamily. OTCase family.

The protein localises to the cytoplasm. The enzyme catalyses carbamoyl phosphate + L-ornithine = L-citrulline + phosphate + H(+). Its pathway is amino-acid biosynthesis; L-arginine biosynthesis; L-arginine from L-ornithine and carbamoyl phosphate: step 1/3. Functionally, reversibly catalyzes the transfer of the carbamoyl group from carbamoyl phosphate (CP) to the N(epsilon) atom of ornithine (ORN) to produce L-citrulline. In Hydrogenovibrio crunogenus (strain DSM 25203 / XCL-2) (Thiomicrospira crunogena), this protein is Ornithine carbamoyltransferase.